Consider the following 1029-residue polypeptide: Probable E3 ubiquitin protein ligase C167.07c (1029 aa).

The 30-residue stretch at 46–75 (AENNSVAVQSLSRGFLARRKFKQDFRERWI) folds into the IQ domain. An HECT domain is found at 692–1029 (FGKLLKGPIR…VRSGVGFGFS (338 aa)). The Glycyl thioester intermediate role is filled by cysteine 997.

It localises to the cytoplasm. It is found in the nucleus. It catalyses the reaction S-ubiquitinyl-[E2 ubiquitin-conjugating enzyme]-L-cysteine + [acceptor protein]-L-lysine = [E2 ubiquitin-conjugating enzyme]-L-cysteine + N(6)-ubiquitinyl-[acceptor protein]-L-lysine.. Functionally, probable E3 ubiquitin-protein ligase which mediates ubiquitination and subsequent proteasomal degradation of target proteins. This Schizosaccharomyces pombe (strain 972 / ATCC 24843) (Fission yeast) protein is Probable E3 ubiquitin protein ligase C167.07c.